Here is a 157-residue protein sequence, read N- to C-terminus: MEEREESSSHEHLKEKLRELEEEWTAMKTGKNSSAVSWITVEDALEYVENSPRNLMLSLQHKPKAEMIQEISPLRRKLFHDSDDDDQTKKTTLLSHSSCWSSNVTSSSDTTKAKKKTTIRRFVSVTMVLLLSWVLVVLMNHFDHLSMNTQIITLVPT.

Positions 104 to 157 (VTSSSDTTKAKKKTTIRRFVSVTMVLLLSWVLVVLMNHFDHLSMNTQIITLVPT) constitute a KASH domain. A helical transmembrane segment spans residues 122-142 (FVSVTMVLLLSWVLVVLMNHF). Positions 154–157 (LVPT) match the Required for nuclear localization motif.

In terms of assembly, interacts with SUN1 and SUN2.

It is found in the nucleus membrane. This is Protein SINE4 from Arabidopsis thaliana (Mouse-ear cress).